Here is a 396-residue protein sequence, read N- to C-terminus: Anhydro-N-acetylmuramic acid kinase (396 aa).

21–28 (GTSADGID) is an ATP binding site.

The protein belongs to the anhydro-N-acetylmuramic acid kinase family.

The enzyme catalyses 1,6-anhydro-N-acetyl-beta-muramate + ATP + H2O = N-acetyl-D-muramate 6-phosphate + ADP + H(+). It participates in amino-sugar metabolism; 1,6-anhydro-N-acetylmuramate degradation. Its pathway is cell wall biogenesis; peptidoglycan recycling. Functionally, catalyzes the specific phosphorylation of 1,6-anhydro-N-acetylmuramic acid (anhMurNAc) with the simultaneous cleavage of the 1,6-anhydro ring, generating MurNAc-6-P. Is required for the utilization of anhMurNAc either imported from the medium or derived from its own cell wall murein, and thus plays a role in cell wall recycling. The polypeptide is Anhydro-N-acetylmuramic acid kinase (Caldanaerobacter subterraneus subsp. tengcongensis (strain DSM 15242 / JCM 11007 / NBRC 100824 / MB4) (Thermoanaerobacter tengcongensis)).